A 570-amino-acid chain; its full sequence is Proline--tRNA ligase (570 aa).

This sequence belongs to the class-II aminoacyl-tRNA synthetase family. ProS type 1 subfamily. As to quaternary structure, homodimer.

It localises to the cytoplasm. The catalysed reaction is tRNA(Pro) + L-proline + ATP = L-prolyl-tRNA(Pro) + AMP + diphosphate. In terms of biological role, catalyzes the attachment of proline to tRNA(Pro) in a two-step reaction: proline is first activated by ATP to form Pro-AMP and then transferred to the acceptor end of tRNA(Pro). As ProRS can inadvertently accommodate and process non-cognate amino acids such as alanine and cysteine, to avoid such errors it has two additional distinct editing activities against alanine. One activity is designated as 'pretransfer' editing and involves the tRNA(Pro)-independent hydrolysis of activated Ala-AMP. The other activity is designated 'posttransfer' editing and involves deacylation of mischarged Ala-tRNA(Pro). The misacylated Cys-tRNA(Pro) is not edited by ProRS. The sequence is that of Proline--tRNA ligase from Neisseria meningitidis serogroup A / serotype 4A (strain DSM 15465 / Z2491).